A 525-amino-acid chain; its full sequence is GMP synthase [glutamine-hydrolyzing] (525 aa).

Residues 8–207 form the Glutamine amidotransferase type-1 domain; that stretch reads KILILDFGSQ…ALDICGCAAN (200 aa). Catalysis depends on C85, which acts as the Nucleophile. Catalysis depends on residues H181 and E183. The GMPS ATP-PPase domain maps to 208–400; that stretch reads WKPSSIIEDA…LGLPYNMLYR (193 aa). ATP is bound at residue 235 to 241; that stretch reads SGGVDSS.

Homodimer.

It catalyses the reaction XMP + L-glutamine + ATP + H2O = GMP + L-glutamate + AMP + diphosphate + 2 H(+). Its pathway is purine metabolism; GMP biosynthesis; GMP from XMP (L-Gln route): step 1/1. Functionally, catalyzes the synthesis of GMP from XMP. The sequence is that of GMP synthase [glutamine-hydrolyzing] from Shewanella sp. (strain ANA-3).